A 476-amino-acid polypeptide reads, in one-letter code: Glycogen synthase (476 aa).

K15 serves as a coordination point for ADP-alpha-D-glucose.

It belongs to the glycosyltransferase 1 family. Bacterial/plant glycogen synthase subfamily.

It catalyses the reaction [(1-&gt;4)-alpha-D-glucosyl](n) + ADP-alpha-D-glucose = [(1-&gt;4)-alpha-D-glucosyl](n+1) + ADP + H(+). Its pathway is glycan biosynthesis; glycogen biosynthesis. Functionally, synthesizes alpha-1,4-glucan chains using ADP-glucose. This Bacillus cereus (strain Q1) protein is Glycogen synthase.